We begin with the raw amino-acid sequence, 160 residues long: Endoribonuclease YbeY (160 aa).

The Zn(2+) site is built by H112, H116, and H122. The interval 141–160 (ELGHPDPYACDDEEPPSKEK) is disordered.

Belongs to the endoribonuclease YbeY family. Requires Zn(2+) as cofactor.

It is found in the cytoplasm. Its function is as follows. Single strand-specific metallo-endoribonuclease involved in late-stage 70S ribosome quality control and in maturation of the 3' terminus of the 16S rRNA. The sequence is that of Endoribonuclease YbeY from Pseudomonas paraeruginosa (strain DSM 24068 / PA7) (Pseudomonas aeruginosa (strain PA7)).